The primary structure comprises 283 residues: MCNTPTYCDLGKAAKDVFNKGYGFGMVKIDLRTKSCSGVEFSTSGHAYTDTGKASGNLETKYKVCNYGLTFTQKWNTDNTLGTEISLENKLAEGLKLTLDTIFVPNTGKKSGKLKASYKRDCFSLGSNVDIDFSGPTIYGWAVLAFEGWLAGYQMSFDTAKSKLSQNNFALGYKAADFQLHTHVNDGTEFGGSIYQKVNEKIETSINLAWTAGSNNTRFGIAAKYKLDCRTSLSAKVNNASLIGLGYTQTLRPGVKLTLSALIDGKNFNAGGHKVGLGFELEA.

Cysteine 2 bears the N-acetylcysteine mark. Threonine 4 is subject to Phosphothreonine. 3 positions are modified to N6-acetyllysine: lysine 12, lysine 15, and lysine 20. 2 consecutive transmembrane segments (beta stranded) span residues 26 to 35 (MVKIDLRTKS) and 39 to 47 (VEFSTSGHA). Residue lysine 53 forms a Glycyl lysine isopeptide (Lys-Gly) (interchain with G-Cter in ubiquitin) linkage. The next 3 membrane-spanning stretches (beta stranded) occupy residues 54 to 64 (ASGNLETKYKV), 69 to 76 (LTFTQKWN), and 80 to 89 (TLGTEISLEN). Lysine 90 is subject to N6-acetyllysine. Residues 95–104 (LKLTLDTIFV) traverse the membrane as a beta stranded segment. Glycyl lysine isopeptide (Lys-Gly) (interchain with G-Cter in ubiquitin) cross-links involve residues lysine 109 and lysine 110. Beta stranded transmembrane passes span 111-120 (SGKLKASYKR), 123-130 (FSLGSNVD), 137-145 (TIYGWAVLA), 150-158 (LAGYQMSFD), 163-175 (KLSQ…GYKA), 178-185 (FQLHTHVN), 189-198 (EFGGSIYQKV), 202-211 (IETSINLAWT), 218-227 (RFGIAAKYKL), and 231-238 (TSLSAKVN). The residue at position 241 (serine 241) is a Phosphoserine. Residues 242 to 244 (LIG) and 260 to 264 (SALID) contribute to the NAD(+) site. 2 consecutive transmembrane segments (beta stranded) span residues 242–251 (LIGLGYTQTL) and 254–263 (GVKLTLSALI). N6-acetyllysine; alternate is present on lysine 266. Residue lysine 266 forms a Glycyl lysine isopeptide (Lys-Gly) (interchain with G-Cter in ubiquitin); alternate linkage. Residues 273–282 (HKVGLGFELE) form a beta stranded membrane-spanning segment.

It belongs to the eukaryotic mitochondrial porin family. Interacts with ARMC12 in a TBC1D21-dependent manner. Interacts with MISFA. Ubiquitinated by PRKN during mitophagy, leading to its degradation and enhancement of mitophagy. Deubiquitinated by USP30.

The protein localises to the mitochondrion outer membrane. The protein resides in the membrane. It carries out the reaction chloride(in) = chloride(out). The enzyme catalyses K(+)(in) = K(+)(out). Functionally, non-selective voltage-gated ion channel that mediates the transport of anions and cations through the mitochondrion outer membrane and plasma membrane. Forms a high-conducting channel with a stable open state and a voltage-induced closure with a mild preference for anions over cations. Involved in male fertility and sperm mitochondrial sheath formation. In Oryctolagus cuniculus (Rabbit), this protein is Non-selective voltage-gated ion channel VDAC3.